A 649-amino-acid chain; its full sequence is Extracellular metalloproteinase 4 (649 aa).

A signal peptide spans 1–18 (MHGLLLAGLLALPSNVLG). Positions 19–260 (HPAEPPNSVN…VHGVVDYVAS (242 aa)) are excised as a propeptide. A Zn(2+)-binding site is contributed by histidine 443. Glutamate 444 is an active-site residue. Residue histidine 447 participates in Zn(2+) binding. N-linked (GlcNAc...) asparagine glycans are attached at residues asparagine 494 and asparagine 609.

Belongs to the peptidase M36 family. Zn(2+) serves as cofactor.

Its subcellular location is the secreted. Its function is as follows. Secreted metalloproteinase probably acting as a virulence factor. The polypeptide is Extracellular metalloproteinase 4 (MEP4) (Arthroderma otae (strain ATCC MYA-4605 / CBS 113480) (Microsporum canis)).